A 75-amino-acid chain; its full sequence is CLAVATA3/ESR (CLE)-related protein 2 (75 aa).

An N-terminal signal peptide occupies residues 1-22; it reads MAKLSFTFCFLLFLLLSSIAAG. A disordered region spans residues 40-75; sequence PSIEATSPTVEDDQAAGSHGKSPERLSPGGPDPQHH. Hydroxyproline is present on residues Pro-67 and Pro-70. A glycan (O-linked (Ara...) hydroxyproline) is linked at Pro-70.

It belongs to the CLV3/ESR signal peptide family. In terms of assembly, interacts with the extracellular leucine-rich repeat region of CLV1. Post-translationally, the O-glycosylation (arabinosylation) of the hydroxyproline Pro-70 enhances binding affinity of the CLE2p peptide for its receptor. As to expression, mostly expressed in roots and seedlings, and, to a lower extent, in apex.

The protein resides in the secreted. It localises to the extracellular space. Its function is as follows. Extracellular signal peptide that regulates cell fate. May act with CLV1 as a ligand-receptor pair in a signal transduction pathway, coordinating growth between adjacent meristematic regions. The protein is CLAVATA3/ESR (CLE)-related protein 2 of Arabidopsis thaliana (Mouse-ear cress).